Consider the following 258-residue polypeptide: uncharacterized protein (258 aa).

Transmembrane regions (helical) follow at residues L14–I34, V53–V73, A110–L130, G185–F205, and G238–I258.

The protein belongs to the TMEM19 family.

It localises to the cell membrane. This is an uncharacterized protein from Synechocystis sp. (strain ATCC 27184 / PCC 6803 / Kazusa).